A 253-amino-acid polypeptide reads, in one-letter code: 5'/3'-nucleotidase SurE (253 aa).

4 residues coordinate a divalent metal cation: D8, D9, S39, and N92.

This sequence belongs to the SurE nucleotidase family. Requires a divalent metal cation as cofactor.

It is found in the cytoplasm. It catalyses the reaction a ribonucleoside 5'-phosphate + H2O = a ribonucleoside + phosphate. It carries out the reaction a ribonucleoside 3'-phosphate + H2O = a ribonucleoside + phosphate. The enzyme catalyses [phosphate](n) + H2O = [phosphate](n-1) + phosphate + H(+). Functionally, nucleotidase with a broad substrate specificity as it can dephosphorylate various ribo- and deoxyribonucleoside 5'-monophosphates and ribonucleoside 3'-monophosphates with highest affinity to 3'-AMP. Also hydrolyzes polyphosphate (exopolyphosphatase activity) with the preference for short-chain-length substrates (P20-25). Might be involved in the regulation of dNTP and NTP pools, and in the turnover of 3'-mononucleotides produced by numerous intracellular RNases (T1, T2, and F) during the degradation of various RNAs. The sequence is that of 5'/3'-nucleotidase SurE from Escherichia coli O17:K52:H18 (strain UMN026 / ExPEC).